We begin with the raw amino-acid sequence, 429 residues long: MKNTYNLRSIAAKAISQVLDQGQSLSAVLPELQKNISDKDRALLQELCFGTLRVLPQLEWCIQQLMARPMTGKQRVFHYLIMVGLYQLIYTRIPPHAALAETVEGATVLKRPQLKGLINGVLRQFQRQQVELLERAVNNDSHYLHPSWLLARIKQAYPAQWQQILDANNQRPPMWLRVNRQHHSRSEYLELLTQADINAEPHPIYRDAVRLITPCAVNHLPGFELGWVTVQDASAQGCVDLLDPQNGEQILDLCAAPGGKTTHILEAAPKAHVLAVDIDEQRLSRVKENLQRLQLQAVVRVGDGRAPDTWCGDQQFDRILLDAPCSATGVIRRHPDIKWLRRDRDISELAQLQSEIIEAIWPKLKHGGVLVYATCSILPEENQQQIAAFLQRHPEAQLTETGTTAAPGKQNLPHPEDGDGFFYAKIIKK.

S-adenosyl-L-methionine-binding positions include 254 to 260 (CAAPGGK), Asp277, Asp303, and Asp322. Residue Cys375 is the Nucleophile of the active site.

It belongs to the class I-like SAM-binding methyltransferase superfamily. RsmB/NOP family.

The protein localises to the cytoplasm. The enzyme catalyses cytidine(967) in 16S rRNA + S-adenosyl-L-methionine = 5-methylcytidine(967) in 16S rRNA + S-adenosyl-L-homocysteine + H(+). Specifically methylates the cytosine at position 967 (m5C967) of 16S rRNA. In Yersinia pestis bv. Antiqua (strain Angola), this protein is Ribosomal RNA small subunit methyltransferase B.